A 331-amino-acid polypeptide reads, in one-letter code: ATPase GET3 (331 aa).

Position 32–39 (32–39 (KGGVGKTT)) interacts with ATP. Asp61 is an active-site residue. ATP-binding residues include Glu235 and Asn262. 2 residues coordinate Zn(2+): Cys273 and Cys276.

This sequence belongs to the arsA ATPase family. In terms of assembly, homodimer.

The protein localises to the cytoplasm. Its subcellular location is the endoplasmic reticulum. Its function is as follows. ATPase required for the post-translational delivery of tail-anchored (TA) proteins to the endoplasmic reticulum. Recognizes and selectively binds the transmembrane domain of TA proteins in the cytosol. This complex then targets to the endoplasmic reticulum by membrane-bound receptors, where the tail-anchored protein is released for insertion. This process is regulated by ATP binding and hydrolysis. ATP binding drives the homodimer towards the closed dimer state, facilitating recognition of newly synthesized TA membrane proteins. ATP hydrolysis is required for insertion. Subsequently, the homodimer reverts towards the open dimer state, lowering its affinity for the membrane-bound receptor, and returning it to the cytosol to initiate a new round of targeting. The chain is ATPase GET3 from Malassezia globosa (strain ATCC MYA-4612 / CBS 7966) (Dandruff-associated fungus).